We begin with the raw amino-acid sequence, 133 residues long: Sec-independent protein translocase protein TatB (133 aa).

A helical transmembrane segment spans residues 1–21 (MFDIGFWELVLIAIVALVVLG). The disordered stretch occupies residues 67-133 (EQMGMQNLSP…ASQPAEKKAE (67 aa)). Residues 70 to 84 (GMQNLSPELQKSVES) are compositionally biased toward polar residues. Over residues 97–116 (AATPSSEASSTSSNPSSATE) the composition is skewed to low complexity.

It belongs to the TatB family. The Tat system comprises two distinct complexes: a TatABC complex, containing multiple copies of TatA, TatB and TatC subunits, and a separate TatA complex, containing only TatA subunits. Substrates initially bind to the TatABC complex, which probably triggers association of the separate TatA complex to form the active translocon.

The protein localises to the cell inner membrane. Part of the twin-arginine translocation (Tat) system that transports large folded proteins containing a characteristic twin-arginine motif in their signal peptide across membranes. Together with TatC, TatB is part of a receptor directly interacting with Tat signal peptides. TatB may form an oligomeric binding site that transiently accommodates folded Tat precursor proteins before their translocation. This Vibrio cholerae serotype O1 (strain ATCC 39315 / El Tor Inaba N16961) protein is Sec-independent protein translocase protein TatB.